The following is a 372-amino-acid chain: Spermidine/putrescine import ATP-binding protein PotA (372 aa).

Residues 13–243 enclose the ABC transporter domain; sequence IKLTGISKSF…PKNLFVARFI (231 aa). Position 45–52 (45–52) interacts with ATP; it reads GPSGCGKT.

Belongs to the ABC transporter superfamily. Spermidine/putrescine importer (TC 3.A.1.11.1) family. In terms of assembly, the complex is composed of two ATP-binding proteins (PotA), two transmembrane proteins (PotB and PotC) and a solute-binding protein (PotD).

Its subcellular location is the cell inner membrane. The catalysed reaction is ATP + H2O + polyamine-[polyamine-binding protein]Side 1 = ADP + phosphate + polyamineSide 2 + [polyamine-binding protein]Side 1.. Functionally, part of the ABC transporter complex PotABCD involved in spermidine/putrescine import. Responsible for energy coupling to the transport system. This Aliivibrio fischeri (strain ATCC 700601 / ES114) (Vibrio fischeri) protein is Spermidine/putrescine import ATP-binding protein PotA.